Consider the following 100-residue polypeptide: Aspartyl/glutamyl-tRNA(Asn/Gln) amidotransferase subunit C (100 aa).

This sequence belongs to the GatC family. In terms of assembly, heterotrimer of A, B and C subunits.

The enzyme catalyses L-glutamyl-tRNA(Gln) + L-glutamine + ATP + H2O = L-glutaminyl-tRNA(Gln) + L-glutamate + ADP + phosphate + H(+). It carries out the reaction L-aspartyl-tRNA(Asn) + L-glutamine + ATP + H2O = L-asparaginyl-tRNA(Asn) + L-glutamate + ADP + phosphate + 2 H(+). Allows the formation of correctly charged Asn-tRNA(Asn) or Gln-tRNA(Gln) through the transamidation of misacylated Asp-tRNA(Asn) or Glu-tRNA(Gln) in organisms which lack either or both of asparaginyl-tRNA or glutaminyl-tRNA synthetases. The reaction takes place in the presence of glutamine and ATP through an activated phospho-Asp-tRNA(Asn) or phospho-Glu-tRNA(Gln). This chain is Aspartyl/glutamyl-tRNA(Asn/Gln) amidotransferase subunit C, found in Streptococcus uberis (strain ATCC BAA-854 / 0140J).